The chain runs to 279 residues: Osmoprotective compounds uptake permease protein GgtC (279 aa).

A run of 7 helical transmembrane segments spans residues 7–27 (LLFL…LSFF), 58–78 (LWLV…AVLV), 90–110 (IIFL…KFVY), 120–140 (IGLL…WLVE), 146–166 (FALI…ILSA), 202–222 (LLVV…IVFV), and 247–267 (FGRG…VMIT). An ABC transmembrane type-1 domain is found at 53-270 (FRNNLLWLVL…IVPVMITNIR (218 aa)).

The protein belongs to the binding-protein-dependent transport system permease family. As to quaternary structure, the complex is composed of two ATP-binding proteins (GgtA), two transmembrane proteins (GgtC and GgtD) and a solute-binding protein (GgtB).

The protein localises to the cell membrane. Its function is as follows. Part of the ABC transporter complex GgtABCD involved in the uptake of the osmoprotective compounds glucosylglycerol (GG), sucrose and trehalose. Responsible for the translocation of the substrate across the membrane. The chain is Osmoprotective compounds uptake permease protein GgtC from Synechocystis sp. (strain ATCC 27184 / PCC 6803 / Kazusa).